Reading from the N-terminus, the 90-residue chain is MTVKQTVEISNKLGMHARPAMKLFELMQNYDAEVLLRNDEGTVAEANSVIALLMLDSAKGRQIEIEANGPQEVEALAAVIALFNAGFDED.

An HPr domain is found at 2-90; sequence TVKQTVEISN…ALFNAGFDED (89 aa). The Pros-phosphohistidine intermediate role is filled by His16.

It belongs to the HPr family.

It is found in the cytoplasm. Component of the phosphoenolpyruvate-dependent nitrogen-metabolic phosphotransferase system (nitrogen-metabolic PTS), that seems to be involved in regulating nitrogen metabolism. The phosphoryl group from phosphoenolpyruvate (PEP) is transferred to the phosphoryl carrier protein NPr by enzyme I-Ntr. Phospho-NPr then transfers it to EIIA-Ntr. Could function in the transcriptional regulation of sigma-54 dependent operons in conjunction with the NPr (PtsO) and EIIA-Ntr (PtsN) proteins. The protein is Phosphocarrier protein NPr (ptsO) of Klebsiella oxytoca.